The chain runs to 260 residues: Thiazole synthase (260 aa).

Catalysis depends on K96, which acts as the Schiff-base intermediate with DXP. 1-deoxy-D-xylulose 5-phosphate contacts are provided by residues G157, 184–185 (AG), and 206–207 (NT).

This sequence belongs to the ThiG family. In terms of assembly, homotetramer. Forms heterodimers with either ThiH or ThiS.

Its subcellular location is the cytoplasm. It catalyses the reaction [ThiS sulfur-carrier protein]-C-terminal-Gly-aminoethanethioate + 2-iminoacetate + 1-deoxy-D-xylulose 5-phosphate = [ThiS sulfur-carrier protein]-C-terminal Gly-Gly + 2-[(2R,5Z)-2-carboxy-4-methylthiazol-5(2H)-ylidene]ethyl phosphate + 2 H2O + H(+). The protein operates within cofactor biosynthesis; thiamine diphosphate biosynthesis. Its function is as follows. Catalyzes the rearrangement of 1-deoxy-D-xylulose 5-phosphate (DXP) to produce the thiazole phosphate moiety of thiamine. Sulfur is provided by the thiocarboxylate moiety of the carrier protein ThiS. In vitro, sulfur can be provided by H(2)S. The sequence is that of Thiazole synthase from Rhodopseudomonas palustris (strain TIE-1).